We begin with the raw amino-acid sequence, 603 residues long: Isocitrate dehydrogenase kinase/phosphatase (603 aa).

Residues 327–333 (APGIKGL) and lysine 348 each bind ATP. Aspartate 383 is an active-site residue.

This sequence belongs to the AceK family.

The protein resides in the cytoplasm. It carries out the reaction L-seryl-[isocitrate dehydrogenase] + ATP = O-phospho-L-seryl-[isocitrate dehydrogenase] + ADP + H(+). Bifunctional enzyme which can phosphorylate or dephosphorylate isocitrate dehydrogenase (IDH) on a specific serine residue. This is a regulatory mechanism which enables bacteria to bypass the Krebs cycle via the glyoxylate shunt in response to the source of carbon. When bacteria are grown on glucose, IDH is fully active and unphosphorylated, but when grown on acetate or ethanol, the activity of IDH declines drastically concomitant with its phosphorylation. In Burkholderia mallei (strain ATCC 23344), this protein is Isocitrate dehydrogenase kinase/phosphatase.